Here is a 121-residue protein sequence, read N- to C-terminus: Neuropeptide-like protein 7 (121 aa).

Residues methionine 1–alanine 22 form the signal peptide.

In terms of biological role, may regulate lifespan in response to food availability and oxidative stress. The chain is Neuropeptide-like protein 7 from Caenorhabditis elegans.